A 215-amino-acid polypeptide reads, in one-letter code: UPF0502 protein YceH (215 aa).

N6-acetyllysine is present on lysine 80.

Belongs to the UPF0502 family.

This chain is UPF0502 protein YceH, found in Escherichia coli O81 (strain ED1a).